Reading from the N-terminus, the 371-residue chain is UDP-N-acetylglucosamine--N-acetylmuramyl-(pentapeptide) pyrophosphoryl-undecaprenol N-acetylglucosamine transferase (371 aa).

UDP-N-acetyl-alpha-D-glucosamine is bound by residues 10 to 12 (TGG), asparagine 122, arginine 166, serine 196, and glutamine 301.

This sequence belongs to the glycosyltransferase 28 family. MurG subfamily.

The protein localises to the cell inner membrane. It catalyses the reaction di-trans,octa-cis-undecaprenyl diphospho-N-acetyl-alpha-D-muramoyl-L-alanyl-D-glutamyl-meso-2,6-diaminopimeloyl-D-alanyl-D-alanine + UDP-N-acetyl-alpha-D-glucosamine = di-trans,octa-cis-undecaprenyl diphospho-[N-acetyl-alpha-D-glucosaminyl-(1-&gt;4)]-N-acetyl-alpha-D-muramoyl-L-alanyl-D-glutamyl-meso-2,6-diaminopimeloyl-D-alanyl-D-alanine + UDP + H(+). It participates in cell wall biogenesis; peptidoglycan biosynthesis. Functionally, cell wall formation. Catalyzes the transfer of a GlcNAc subunit on undecaprenyl-pyrophosphoryl-MurNAc-pentapeptide (lipid intermediate I) to form undecaprenyl-pyrophosphoryl-MurNAc-(pentapeptide)GlcNAc (lipid intermediate II). This Halothermothrix orenii (strain H 168 / OCM 544 / DSM 9562) protein is UDP-N-acetylglucosamine--N-acetylmuramyl-(pentapeptide) pyrophosphoryl-undecaprenol N-acetylglucosamine transferase.